The chain runs to 119 residues: uncharacterized protein (119 aa).

This is an uncharacterized protein from Vaccinia virus (strain Copenhagen) (VACV).